An 83-amino-acid chain; its full sequence is RNA-binding protein Hfq (83 aa).

A Sm domain is found at 9-69 (DYFLNQLRKD…ISTFAPARNV (61 aa)).

Belongs to the Hfq family. Homohexamer.

Functionally, RNA chaperone that binds small regulatory RNA (sRNAs) and mRNAs to facilitate mRNA translational regulation in response to envelope stress, environmental stress and changes in metabolite concentrations. Also binds with high specificity to tRNAs. This chain is RNA-binding protein Hfq, found in Exiguobacterium sibiricum (strain DSM 17290 / CCUG 55495 / CIP 109462 / JCM 13490 / 255-15).